Here is a 375-residue protein sequence, read N- to C-terminus: Queuine tRNA-ribosyltransferase (375 aa).

D89 functions as the Proton acceptor in the catalytic mechanism. Substrate-binding positions include 89–93, D143, Q187, and G214; that span reads DSGGF. Positions 245-251 are RNA binding; it reads GVGKPED. The Nucleophile role is filled by D264. The segment at 269-273 is RNA binding; important for wobble base 34 recognition; the sequence is TRNAR. The Zn(2+) site is built by C302, C304, C307, and H333.

It belongs to the queuine tRNA-ribosyltransferase family. Homodimer. Within each dimer, one monomer is responsible for RNA recognition and catalysis, while the other monomer binds to the replacement base PreQ1. Requires Zn(2+) as cofactor.

The catalysed reaction is 7-aminomethyl-7-carbaguanine + guanosine(34) in tRNA = 7-aminomethyl-7-carbaguanosine(34) in tRNA + guanine. It participates in tRNA modification; tRNA-queuosine biosynthesis. Catalyzes the base-exchange of a guanine (G) residue with the queuine precursor 7-aminomethyl-7-deazaguanine (PreQ1) at position 34 (anticodon wobble position) in tRNAs with GU(N) anticodons (tRNA-Asp, -Asn, -His and -Tyr). Catalysis occurs through a double-displacement mechanism. The nucleophile active site attacks the C1' of nucleotide 34 to detach the guanine base from the RNA, forming a covalent enzyme-RNA intermediate. The proton acceptor active site deprotonates the incoming PreQ1, allowing a nucleophilic attack on the C1' of the ribose to form the product. After dissociation, two additional enzymatic reactions on the tRNA convert PreQ1 to queuine (Q), resulting in the hypermodified nucleoside queuosine (7-(((4,5-cis-dihydroxy-2-cyclopenten-1-yl)amino)methyl)-7-deazaguanosine). This Citrobacter koseri (strain ATCC BAA-895 / CDC 4225-83 / SGSC4696) protein is Queuine tRNA-ribosyltransferase.